Here is a 272-residue protein sequence, read N- to C-terminus: NH(3)-dependent NAD(+) synthetase (272 aa).

Gly-45–Ser-52 serves as a coordination point for ATP. Residue Asp-51 participates in Mg(2+) binding. A deamido-NAD(+)-binding site is contributed by Arg-138. Thr-158 is a binding site for ATP. Residue Glu-163 coordinates Mg(2+). Positions 171 and 178 each coordinate deamido-NAD(+). 2 residues coordinate ATP: Lys-187 and Thr-209. His-258–Lys-259 provides a ligand contact to deamido-NAD(+).

Belongs to the NAD synthetase family. In terms of assembly, homodimer.

It catalyses the reaction deamido-NAD(+) + NH4(+) + ATP = AMP + diphosphate + NAD(+) + H(+). It functions in the pathway cofactor biosynthesis; NAD(+) biosynthesis; NAD(+) from deamido-NAD(+) (ammonia route): step 1/1. In terms of biological role, catalyzes the ATP-dependent amidation of deamido-NAD to form NAD. Uses ammonia as a nitrogen source. The polypeptide is NH(3)-dependent NAD(+) synthetase (Bacillus licheniformis (strain ATCC 14580 / DSM 13 / JCM 2505 / CCUG 7422 / NBRC 12200 / NCIMB 9375 / NCTC 10341 / NRRL NRS-1264 / Gibson 46)).